Consider the following 231-residue polypeptide: Response regulator Rre1 (231 aa).

The Response regulatory domain occupies Ser-6 to Leu-123. Asp-56 carries the 4-aspartylphosphate modification. In terms of domain architecture, HTH luxR-type spans Pro-163–Gly-228. Residues Asn-187–Ser-206 constitute a DNA-binding region (H-T-H motif).

In terms of assembly, interacts with histidine kinase Hik2; may accept phosphate from Hik2.

Its function is as follows. Member of at least 2 two-component regulatory systems Hik2/Rre1 and Hik34/Rre1. Responds to hyperosmotic stress, regulates expression of at least 24 genes including dnaK2 and hspA with Hik34 and sigB (sll0306), sll0528, slr1119, slr0852 and ssr3188 with Hik2. Responds to salt stress, regulates expression of at least 24 genes including adhA, dnaK2 and hspA with Hik34. Binds the adhA promoter. Phosphorylated by Hik2 in vitro. Phosphorylated protein has 10-fold higher affinity for DNA than unphosphorylated protein. The protein is Response regulator Rre1 of Synechocystis sp. (strain ATCC 27184 / PCC 6803 / Kazusa).